The sequence spans 318 residues: NADH-ubiquinone oxidoreductase chain 1 (318 aa).

The next 8 membrane-spanning stretches (helical) occupy residues 2 to 22, 70 to 90, 100 to 120, 147 to 167, 171 to 191, 217 to 237, 253 to 273, and 294 to 314; these read FMIN…FLTL, MFII…IPLP, LGIL…LWSG, AIIL…TLII, YLWL…STLA, AGPF…MNIF, ELYS…FLWI, and LPLT…LSSI.

Belongs to the complex I subunit 1 family. In terms of assembly, core subunit of respiratory chain NADH dehydrogenase (Complex I) which is composed of 45 different subunits.

The protein localises to the mitochondrion inner membrane. It carries out the reaction a ubiquinone + NADH + 5 H(+)(in) = a ubiquinol + NAD(+) + 4 H(+)(out). Functionally, core subunit of the mitochondrial membrane respiratory chain NADH dehydrogenase (Complex I) which catalyzes electron transfer from NADH through the respiratory chain, using ubiquinone as an electron acceptor. Essential for the catalytic activity and assembly of complex I. This is NADH-ubiquinone oxidoreductase chain 1 (MT-ND1) from Equus caballus (Horse).